The sequence spans 49 residues: Large ribosomal subunit protein bL33A (49 aa).

It belongs to the bacterial ribosomal protein bL33 family.

The chain is Large ribosomal subunit protein bL33A from Mycoplasmopsis agalactiae (strain NCTC 10123 / CIP 59.7 / PG2) (Mycoplasma agalactiae).